Consider the following 133-residue polypeptide: Hydrogenase maturation factor HypA (133 aa).

Residue His-2 participates in Ni(2+) binding. Residues Cys-73, Cys-75, Cys-105, and Cys-108 each coordinate Zn(2+).

Belongs to the HypA/HybF family.

Its function is as follows. Involved in the maturation of [NiFe] hydrogenases. Required for nickel insertion into the metal center of the hydrogenase. This is Hydrogenase maturation factor HypA from Methanosarcina barkeri (strain Fusaro / DSM 804).